Consider the following 340-residue polypeptide: Methionine import ATP-binding protein MetN (340 aa).

The ABC transporter domain maps to 2–241; that stretch reads IRIENLTKIY…PQSSVAKEFI (240 aa). 38 to 45 provides a ligand contact to ATP; sequence GLSGAGKS.

Belongs to the ABC transporter superfamily. Methionine importer (TC 3.A.1.24) family. In terms of assembly, the complex is composed of two ATP-binding proteins (MetN), two transmembrane proteins (MetI) and a solute-binding protein (MetQ).

The protein localises to the cell membrane. The enzyme catalyses L-methionine(out) + ATP + H2O = L-methionine(in) + ADP + phosphate + H(+). It carries out the reaction D-methionine(out) + ATP + H2O = D-methionine(in) + ADP + phosphate + H(+). In terms of biological role, part of the ABC transporter complex MetNIQ involved in methionine import. Responsible for energy coupling to the transport system. The chain is Methionine import ATP-binding protein MetN from Desulfitobacterium hafniense (strain Y51).